A 185-amino-acid chain; its full sequence is Ribonuclease HII (185 aa).

An RNase H type-2 domain is found at 1–185 (MKICGIDEAG…LKHLQGILEF (185 aa)). Residues aspartate 7, glutamate 8, and aspartate 96 each contribute to the a divalent metal cation site.

The protein belongs to the RNase HII family. The cofactor is Mn(2+). Requires Mg(2+) as cofactor.

It is found in the cytoplasm. The enzyme catalyses Endonucleolytic cleavage to 5'-phosphomonoester.. In terms of biological role, endonuclease that specifically degrades the RNA of RNA-DNA hybrids. The sequence is that of Ribonuclease HII from Campylobacter hominis (strain ATCC BAA-381 / DSM 21671 / CCUG 45161 / LMG 19568 / NCTC 13146 / CH001A).